Here is a 615-residue protein sequence, read N- to C-terminus: Afadin- and alpha-actinin-binding protein (615 aa).

Coiled coils occupy residues 126–227 (KLGS…IAMD) and 266–293 (RQKQ…SLLS). A phosphoserine mark is found at serine 290, serine 293, serine 313, and serine 319. The tract at residues 293 to 316 (SPQKKKPRERAEDGTGTVAISDIE) is disordered. The stretch at 375–461 (ISRQDHEQET…RSFTEAAIRL (87 aa)) forms a coiled coil. A phosphoserine mark is found at serine 537, serine 541, and serine 543. The tract at residues 567 to 615 (PEESKPSEVARESTDQKWSVQSRPSSREGCYSGCSSAFRSAHGDRDDLP) is disordered. Over residues 568–581 (EESKPSEVARESTD) the composition is skewed to basic and acidic residues.

It belongs to the ADIP family. As to quaternary structure, interacts with SSX2 and SSX3. Does not interact with SSX1 and SSX4. Interacts with afadin and alpha-actinin. Interacts with VAV2. Interacts with PCM1. Interacts with WRAP73. In terms of tissue distribution, widely expressed.

It is found in the cell junction. Its subcellular location is the adherens junction. It localises to the nucleus. The protein resides in the cytoplasm. The protein localises to the cytoskeleton. It is found in the microtubule organizing center. Its subcellular location is the centrosome. It localises to the centriolar satellite. The protein resides in the cilium basal body. Functionally, belongs to an adhesion system, which plays a role in the organization of homotypic, interneuronal and heterotypic cell-cell adherens junctions (AJs). May connect the nectin-afadin and E-cadherin-catenin system through alpha-actinin and may be involved in organization of the actin cytoskeleton at AJs through afadin and alpha-actinin. Acts as a centrosome maturation factor, probably by maintaining the integrity of the pericentriolar material and proper microtubule nucleation at mitotic spindle poles. The function seems to implicate at least in part WRAP73; the SSX2IP:WRAP73 complex is proposed to act as regulator of spindle anchoring at the mitotic centrosome. Involved in cell movement: localizes at the leading edge of moving cells in response to PDGF and is required for the formation of the leading edge and the promotion of cell movement, possibly via activation of Rac signaling. Involved in ciliogenesis. It is required for targeted recruitment of the BBSome, CEP290, RAB8, and SSTR3 to the cilia. The polypeptide is Afadin- and alpha-actinin-binding protein (Ssx2ip) (Mus musculus (Mouse)).